A 497-amino-acid polypeptide reads, in one-letter code: NADH-quinone oxidoreductase subunit N (497 aa).

The next 14 membrane-spanning stretches (helical) occupy residues 14–34 (LMAM…MLSI), 45–65 (SLTV…WGLF), 86–106 (IFYS…AYPW), 116–136 (EFYL…SAQH), 137–157 (LAAV…LLGY), 171–191 (YFVL…MLYA), 215–235 (ILAG…LVPF), 253–273 (FLGT…FLYV), 281–301 (LNTA…LMAL), 309–329 (LLGY…IALH), 338–358 (VAVY…VVSL), 385–405 (AAVM…LGFI), 420–439 (WVLT…YYLR), and 461–481 (AFTA…VFGI).

The protein belongs to the complex I subunit 2 family. NDH-1 is composed of 13 different subunits. Subunits NuoA, H, J, K, L, M, N constitute the membrane sector of the complex.

The protein resides in the cell membrane. It catalyses the reaction a quinone + NADH + 5 H(+)(in) = a quinol + NAD(+) + 4 H(+)(out). Functionally, NDH-1 shuttles electrons from NADH, via FMN and iron-sulfur (Fe-S) centers, to quinones in the respiratory chain. The immediate electron acceptor for the enzyme in this species is believed to be ubiquinone. Couples the redox reaction to proton translocation (for every two electrons transferred, four hydrogen ions are translocated across the cytoplasmic membrane), and thus conserves the redox energy in a proton gradient. This Hamiltonella defensa subsp. Acyrthosiphon pisum (strain 5AT) protein is NADH-quinone oxidoreductase subunit N.